The chain runs to 407 residues: Imidazolonepropionase (407 aa).

Fe(3+) contacts are provided by His-68 and His-70. Residues His-68 and His-70 each coordinate Zn(2+). 4-imidazolone-5-propanoate-binding residues include Arg-77, Tyr-140, and His-173. Residue Tyr-140 coordinates N-formimidoyl-L-glutamate. His-238 is a binding site for Fe(3+). His-238 provides a ligand contact to Zn(2+). Gln-241 serves as a coordination point for 4-imidazolone-5-propanoate. Residue Asp-313 coordinates Fe(3+). Position 313 (Asp-313) interacts with Zn(2+). N-formimidoyl-L-glutamate-binding residues include Asn-315 and Gly-317. A 4-imidazolone-5-propanoate-binding site is contributed by Thr-318.

The protein belongs to the metallo-dependent hydrolases superfamily. HutI family. Zn(2+) is required as a cofactor. Requires Fe(3+) as cofactor.

Its subcellular location is the cytoplasm. It carries out the reaction 4-imidazolone-5-propanoate + H2O = N-formimidoyl-L-glutamate. Its pathway is amino-acid degradation; L-histidine degradation into L-glutamate; N-formimidoyl-L-glutamate from L-histidine: step 3/3. Functionally, catalyzes the hydrolytic cleavage of the carbon-nitrogen bond in imidazolone-5-propanoate to yield N-formimidoyl-L-glutamate. It is the third step in the universal histidine degradation pathway. This Burkholderia ambifaria (strain ATCC BAA-244 / DSM 16087 / CCUG 44356 / LMG 19182 / AMMD) (Burkholderia cepacia (strain AMMD)) protein is Imidazolonepropionase.